The sequence spans 227 residues: MLDREGFRPNVGIILLNARNEVFWGKRIGEHSWQFPQGGIKYGETPEQAMYRELHEEIGLLPEHVRIVGRTRDWLRYEVPDKFIRREIRGHYKGQKQIWFLLRMAGRDCDIHLRATEHPEFDAWRWSHYWVPLEAVIEFKRDVYQMALTELSRFLNRHPRVPLSPYGTHGAHGAHGVHGRHGGPRGQALSRAQAAQQADADGNAEVPGAADYVSPATPVSTTRSTDD.

Positions 6 to 149 (GFRPNVGIIL…KRDVYQMALT (144 aa)) constitute a Nudix hydrolase domain. The Nudix box motif lies at 38 to 59 (GGIKYGETPEQAMYRELHEEIG). The disordered stretch occupies residues 165–227 (PYGTHGAHGA…PVSTTRSTDD (63 aa)). The span at 192 to 201 (AQAAQQADAD) shows a compositional bias: low complexity. Residues 217 to 227 (TPVSTTRSTDD) are compositionally biased toward polar residues.

It belongs to the Nudix hydrolase family. RppH subfamily. Requires a divalent metal cation as cofactor.

Functionally, accelerates the degradation of transcripts by removing pyrophosphate from the 5'-end of triphosphorylated RNA, leading to a more labile monophosphorylated state that can stimulate subsequent ribonuclease cleavage. The polypeptide is RNA pyrophosphohydrolase (Cupriavidus taiwanensis (strain DSM 17343 / BCRC 17206 / CCUG 44338 / CIP 107171 / LMG 19424 / R1) (Ralstonia taiwanensis (strain LMG 19424))).